Consider the following 377-residue polypeptide: Putative glutamate--cysteine ligase 2 (377 aa).

Belongs to the glutamate--cysteine ligase type 2 family. YbdK subfamily.

It carries out the reaction L-cysteine + L-glutamate + ATP = gamma-L-glutamyl-L-cysteine + ADP + phosphate + H(+). In terms of biological role, ATP-dependent carboxylate-amine ligase which exhibits weak glutamate--cysteine ligase activity. The polypeptide is Putative glutamate--cysteine ligase 2 (Pseudomonas aeruginosa (strain ATCC 15692 / DSM 22644 / CIP 104116 / JCM 14847 / LMG 12228 / 1C / PRS 101 / PAO1)).